A 382-amino-acid chain; its full sequence is Galactokinase (382 aa).

34–37 (EHTD) provides a ligand contact to substrate. Residue 124 to 130 (GAGLSSS) participates in ATP binding. Residues Ser-130 and Glu-162 each coordinate Mg(2+). Asp-174 functions as the Proton acceptor in the catalytic mechanism. A substrate-binding site is contributed by Tyr-223.

The protein belongs to the GHMP kinase family. GalK subfamily.

The protein localises to the cytoplasm. The enzyme catalyses alpha-D-galactose + ATP = alpha-D-galactose 1-phosphate + ADP + H(+). It participates in carbohydrate metabolism; galactose metabolism. Functionally, catalyzes the transfer of the gamma-phosphate of ATP to D-galactose to form alpha-D-galactose-1-phosphate (Gal-1-P). The sequence is that of Galactokinase from Shigella boydii serotype 18 (strain CDC 3083-94 / BS512).